The primary structure comprises 344 residues: Phenylalanine--tRNA ligase alpha subunit (344 aa).

Glu-261 serves as a coordination point for Mg(2+).

This sequence belongs to the class-II aminoacyl-tRNA synthetase family. Phe-tRNA synthetase alpha subunit type 1 subfamily. In terms of assembly, tetramer of two alpha and two beta subunits. Mg(2+) is required as a cofactor.

Its subcellular location is the cytoplasm. The enzyme catalyses tRNA(Phe) + L-phenylalanine + ATP = L-phenylalanyl-tRNA(Phe) + AMP + diphosphate + H(+). This Ehrlichia ruminantium (strain Gardel) protein is Phenylalanine--tRNA ligase alpha subunit.